The chain runs to 188 residues: Sec-independent protein translocase protein TatB (188 aa).

The helical transmembrane segment at 1-21 (MFDIGWSELVVIGVVALVAIG) threads the bilayer. Residues 147–188 (LPVPAETHALATTDLAPPDLAHPAPAHPEPTNSEPAKDAKAS) are disordered. The segment covering 160–170 (DLAPPDLAHPA) has biased composition (low complexity).

The protein belongs to the TatB family. In terms of assembly, the Tat system comprises two distinct complexes: a TatABC complex, containing multiple copies of TatA, TatB and TatC subunits, and a separate TatA complex, containing only TatA subunits. Substrates initially bind to the TatABC complex, which probably triggers association of the separate TatA complex to form the active translocon.

The protein resides in the cell inner membrane. Part of the twin-arginine translocation (Tat) system that transports large folded proteins containing a characteristic twin-arginine motif in their signal peptide across membranes. Together with TatC, TatB is part of a receptor directly interacting with Tat signal peptides. TatB may form an oligomeric binding site that transiently accommodates folded Tat precursor proteins before their translocation. In Rhodopseudomonas palustris (strain HaA2), this protein is Sec-independent protein translocase protein TatB.